We begin with the raw amino-acid sequence, 209 residues long: MERKVFSKDGKEIRTINLDDRVFNIEISHGSIYNAIKNELSNLRVGTSSTKTRSEVRGSSKKPWKQKGTGRARVGTRRNPVWIGGGIALGPKPRDYSYRLPKKVKRLAFKSVLSLRASDENNFKVIENFNIESGKTKDLALIIKNFASFNGKVVILLGNDDQMIKRAGKNIRDLKILSFDKLRVVDLFYAKNLIALESAVNKLNEFYVK.

The disordered stretch occupies residues 46 to 71; it reads GTSSTKTRSEVRGSSKKPWKQKGTGR. Over residues 59–71 the composition is skewed to basic residues; it reads SSKKPWKQKGTGR.

The protein belongs to the universal ribosomal protein uL4 family. In terms of assembly, part of the 50S ribosomal subunit.

Its function is as follows. One of the primary rRNA binding proteins, this protein initially binds near the 5'-end of the 23S rRNA. It is important during the early stages of 50S assembly. It makes multiple contacts with different domains of the 23S rRNA in the assembled 50S subunit and ribosome. In terms of biological role, forms part of the polypeptide exit tunnel. The chain is Large ribosomal subunit protein uL4 from Borreliella afzelii (strain PKo) (Borrelia afzelii).